The following is a 343-amino-acid chain: Protein RecA (343 aa).

Residue 65–72 participates in ATP binding; it reads GPESSGKT.

Belongs to the RecA family.

The protein localises to the cytoplasm. Can catalyze the hydrolysis of ATP in the presence of single-stranded DNA, the ATP-dependent uptake of single-stranded DNA by duplex DNA, and the ATP-dependent hybridization of homologous single-stranded DNAs. It interacts with LexA causing its activation and leading to its autocatalytic cleavage. The protein is Protein RecA of Campylobacter jejuni subsp. jejuni serotype O:6 (strain 81116 / NCTC 11828).